A 459-amino-acid polypeptide reads, in one-letter code: GPI-anchored wall transfer protein 1 (459 aa).

A glycan (N-linked (GlcNAc...) asparagine) is linked at Asn13. Helical transmembrane passes span 20–40 (IETCGLLLIGIACNVLWVNMT), 50–70 (LGFLVEFFIFCLIPLFVIYVS), 73–93 (VGVFTLCIASFLPSFVLHVIS), 120–140 (IAGVTFYRSQMMLVTVTCILA), 156–176 (WGTSLMDLGVGSFMFSSGTVA), 188–208 (FKNVLWNSFILLILGFARMFL), 221–241 (YGMHWNFFFTLGFMALGVFFF), 250–270 (YFNLATFITLLHHCLLVLTPF), 290–310 (IASLPGYIAIYFYGMYTGSVV), 331–351 (LFPLCILLVLYLVSNFLSVGV), 364–384 (VAFINMFFLTIYILIDAYLFP), 405–425 (LLVFLIANVLTGVVNLSFDTL), and 432–452 (GLTIMTMYLFIICYMAHWLAQ).

The protein belongs to the PIGW family.

It is found in the endoplasmic reticulum membrane. The protein operates within glycolipid biosynthesis; glycosylphosphatidylinositol-anchor biosynthesis. Functionally, probable acetyltransferase, which acetylates the inositol ring of phosphatidylinositol during biosynthesis of GPI-anchor. Has a role in meiosis. This is GPI-anchored wall transfer protein 1 (gwt1) from Schizosaccharomyces pombe (strain 972 / ATCC 24843) (Fission yeast).